The primary structure comprises 4083 residues: Dynein axonemal heavy chain 3 (4083 aa).

Disordered regions lie at residues 1–37 and 111–132; these read MSDT…VSAN and DKTS…PSKK. The tract at residues 1–1357 is stem; it reads MSDTNCSAQK…HVQMITTEAL (1357 aa). 2 coiled-coil regions span residues 1026 to 1052 and 1108 to 1133; these read IKPI…AWLK and RMTE…YLEK. 4 AAA regions span residues 1358-1579, 1639-1870, 2003-2251, and 2362-2613; these read YGYE…VLTA, EALN…LHCK, TIPA…VIQG, and EFNS…LLRH. ATP contacts are provided by residues 1396–1403, 1677–1684, 2041–2048, and 2401–2408; these read GPAGTGKT, GDPMGGKT, GPTGTGKS, and GIGGSGRQ. The stalk stretch occupies residues 2628–2927; sequence FKTLLNSKRQ…NSLEKNIEIC (300 aa). Residues 2651–2714 are a coiled coil; that stretch reads QKLEFASSQV…DEKEANAAAA (64 aa). AAA stretches follow at residues 3012 to 3242 and 3455 to 3679; these read LGDP…EISE and IQNF…QIQM.

Belongs to the dynein heavy chain family. In terms of assembly, consists of at least two heavy chains and a number of intermediate and light chains.

Its subcellular location is the cytoplasm. It localises to the cytoskeleton. The protein resides in the cilium axoneme. In terms of biological role, force generating protein of respiratory cilia. Produces force towards the minus ends of microtubules. Dynein has ATPase activity; the force-producing power stroke is thought to occur on release of ADP. Involved in sperm motility; implicated in sperm flagellar assembly. This is Dynein axonemal heavy chain 3 (Dnah3) from Mus musculus (Mouse).